A 293-amino-acid chain; its full sequence is Ribosomal protein L11 methyltransferase (293 aa).

S-adenosyl-L-methionine contacts are provided by Thr-145, Gly-166, Asp-188, and Asn-230.

It belongs to the methyltransferase superfamily. PrmA family.

Its subcellular location is the cytoplasm. The enzyme catalyses L-lysyl-[protein] + 3 S-adenosyl-L-methionine = N(6),N(6),N(6)-trimethyl-L-lysyl-[protein] + 3 S-adenosyl-L-homocysteine + 3 H(+). In terms of biological role, methylates ribosomal protein L11. This chain is Ribosomal protein L11 methyltransferase, found in Shewanella denitrificans (strain OS217 / ATCC BAA-1090 / DSM 15013).